Consider the following 248-residue polypeptide: Uridylate kinase (248 aa).

An ATP-binding site is contributed by 15–18 (KLSG). The segment at 23–28 (GAEGFG) is involved in allosteric activation by GTP. Gly-57 is a UMP binding site. ATP is bound by residues Gly-58 and Arg-62. Residues Asp-77 and 138–145 (TGNPFFTT) contribute to the UMP site. Thr-165, Tyr-171, and Asp-174 together coordinate ATP.

The protein belongs to the UMP kinase family. In terms of assembly, homohexamer.

It is found in the cytoplasm. It carries out the reaction UMP + ATP = UDP + ADP. Its pathway is pyrimidine metabolism; CTP biosynthesis via de novo pathway; UDP from UMP (UMPK route): step 1/1. With respect to regulation, allosterically activated by GTP. Inhibited by UTP. Catalyzes the reversible phosphorylation of UMP to UDP. This is Uridylate kinase from Yersinia enterocolitica serotype O:8 / biotype 1B (strain NCTC 13174 / 8081).